The chain runs to 424 residues: MLPLIDGKEVKRRWSGRLLAREGVAARVREIIAAVKREGQAAVERYTLELDGVDLKEAGFRVTREEIGAAYRAVSPDLLEALRIARDNIATYHRRQPRGSWMETAADGTILGQICRPLGRVGLYVPGGTAAYPSSVLMTAVPARVAGVREIALATPPRRDGTLPPLLLVAAAEAGVEEIYKMGGAQAVAALAYGTEKVAPVDKIAGPGNIYVTLAKKEVYGQVDIDMLAGPSEIVVIADGKARPDWVAADLLSQAEHDALAGAVLITPDAGLARAVGEEVTRQLEALPRREIASRSLADYGAAVVVTGLDAAMDLANSLAPEHLELYVSEPWSWLGRVENAGAIFLGPYSSEPLGDYLAGPSHVLPTGGTARFYSPLSVDTFLKKSSLIACNRAGFRAAAGYIQALARAEGLEGHARAIELREE.

Positions 124, 186, and 209 each coordinate NAD(+). Positions 232, 254, and 257 each coordinate substrate. Positions 254 and 257 each coordinate Zn(2+). Residues Glu-322 and His-323 each act as proton acceptor in the active site. Substrate contacts are provided by His-323, Asp-356, Glu-410, and His-415. Position 356 (Asp-356) interacts with Zn(2+). His-415 is a binding site for Zn(2+).

It belongs to the histidinol dehydrogenase family. The cofactor is Zn(2+).

It carries out the reaction L-histidinol + 2 NAD(+) + H2O = L-histidine + 2 NADH + 3 H(+). It participates in amino-acid biosynthesis; L-histidine biosynthesis; L-histidine from 5-phospho-alpha-D-ribose 1-diphosphate: step 9/9. Its function is as follows. Catalyzes the sequential NAD-dependent oxidations of L-histidinol to L-histidinaldehyde and then to L-histidine. The chain is Histidinol dehydrogenase from Moorella thermoacetica (strain ATCC 39073 / JCM 9320).